A 319-amino-acid polypeptide reads, in one-letter code: ATP-dependent 6-phosphofructokinase (319 aa).

Position 11 (Gly-11) interacts with ATP. 21–25 is a binding site for ADP; the sequence is RAVVR. Residues 72–73 and 102–105 contribute to the ATP site; these read RC and GDGS. Asp-103 is a Mg(2+) binding site. 125–127 serves as a coordination point for substrate; that stretch reads TID. Catalysis depends on Asp-127, which acts as the Proton acceptor. Arg-154 is an ADP binding site. Residues Arg-162 and 169 to 171 contribute to the substrate site; that span reads MGR. Residues 185-187, Arg-211, and 213-215 contribute to the ADP site; these read GAE and KKH. Residues Glu-222, Arg-243, and 249-252 contribute to the substrate site; that span reads HVQR.

Belongs to the phosphofructokinase type A (PFKA) family. ATP-dependent PFK group I subfamily. Prokaryotic clade 'B1' sub-subfamily. In terms of assembly, homotetramer. It depends on Mg(2+) as a cofactor.

The protein localises to the cytoplasm. It carries out the reaction beta-D-fructose 6-phosphate + ATP = beta-D-fructose 1,6-bisphosphate + ADP + H(+). Its pathway is carbohydrate degradation; glycolysis; D-glyceraldehyde 3-phosphate and glycerone phosphate from D-glucose: step 3/4. With respect to regulation, allosterically activated by ADP and other diphosphonucleosides, and allosterically inhibited by phosphoenolpyruvate. Its function is as follows. Catalyzes the phosphorylation of D-fructose 6-phosphate to fructose 1,6-bisphosphate by ATP, the first committing step of glycolysis. The polypeptide is ATP-dependent 6-phosphofructokinase (Bacillus anthracis (strain A0248)).